Here is a 342-residue protein sequence, read N- to C-terminus: Glycerol-3-phosphate dehydrogenase [NAD(P)+] (342 aa).

3 residues coordinate NADPH: S13, W14, and K108. Residues K108, G139, and S141 each coordinate sn-glycerol 3-phosphate. Position 143 (A143) interacts with NADPH. The sn-glycerol 3-phosphate site is built by K194, D247, S257, R258, and N259. Residue K194 is the Proton acceptor of the active site. R258 provides a ligand contact to NADPH. Residues V282 and E284 each contribute to the NADPH site.

This sequence belongs to the NAD-dependent glycerol-3-phosphate dehydrogenase family.

Its subcellular location is the cytoplasm. It catalyses the reaction sn-glycerol 3-phosphate + NAD(+) = dihydroxyacetone phosphate + NADH + H(+). The enzyme catalyses sn-glycerol 3-phosphate + NADP(+) = dihydroxyacetone phosphate + NADPH + H(+). It participates in membrane lipid metabolism; glycerophospholipid metabolism. Its function is as follows. Catalyzes the reduction of the glycolytic intermediate dihydroxyacetone phosphate (DHAP) to sn-glycerol 3-phosphate (G3P), the key precursor for phospholipid synthesis. In Lactococcus lactis subsp. cremoris (strain SK11), this protein is Glycerol-3-phosphate dehydrogenase [NAD(P)+].